The following is a 272-amino-acid chain: L-aminoadipate-semialdehyde dehydrogenase-phosphopantetheinyl transferase (272 aa).

The protein belongs to the P-Pant transferase superfamily. AcpS family.

It catalyses the reaction apo-[ACP] + CoA = holo-[ACP] + adenosine 3',5'-bisphosphate + H(+). Catalyzes the transfer of a 4'-phosphopantetheine moiety from coenzyme A to a serine residue of acceptor proteins, such as alpha-aminoadipate reductase. Necessary for alpha-aminoadipate reductase activity. This is L-aminoadipate-semialdehyde dehydrogenase-phosphopantetheinyl transferase from Saccharomyces cerevisiae (strain ATCC 204508 / S288c) (Baker's yeast).